The primary structure comprises 129 residues: Small ribosomal subunit protein uS8 (129 aa).

Belongs to the universal ribosomal protein uS8 family. As to quaternary structure, part of the 30S ribosomal subunit. Contacts proteins S5 and S12.

One of the primary rRNA binding proteins, it binds directly to 16S rRNA central domain where it helps coordinate assembly of the platform of the 30S subunit. This Dichelobacter nodosus (strain VCS1703A) protein is Small ribosomal subunit protein uS8.